Consider the following 213-residue polypeptide: MKILLLILIAYLLGSIQTGLWIGKVFFHTNLREHGSGNTGTTNTFRVLGKTAGTITFLVDMLKGTLAVLLPIWLGITEVSPLIIGFFAIIGHVFPFFTGFKGGKAVATSAGVLLGFVPLYFVFLLLVFALTLYLTSMISFSSITAAVVGLITLATFPAIHFLLDGYDPIFSAVLIIIVLVIIFRHTENIARIRNHRENLVPFGLNLTKQNPKK.

Transmembrane regions (helical) follow at residues 3-23 (ILLL…LWIG), 54-76 (TITF…WLGI), 83-100 (IIGF…FTGF), 110-130 (AGVL…VFAL), 142-162 (SITA…IHFL), and 163-183 (LDGY…VIIF).

The protein belongs to the PlsY family. Probably interacts with PlsX.

Its subcellular location is the cell membrane. The enzyme catalyses an acyl phosphate + sn-glycerol 3-phosphate = a 1-acyl-sn-glycero-3-phosphate + phosphate. It functions in the pathway lipid metabolism; phospholipid metabolism. Its function is as follows. Catalyzes the transfer of an acyl group from acyl-phosphate (acyl-PO(4)) to glycerol-3-phosphate (G3P) to form lysophosphatidic acid (LPA). This enzyme utilizes acyl-phosphate as fatty acyl donor, but not acyl-CoA or acyl-ACP. This chain is Glycerol-3-phosphate acyltransferase, found in Streptococcus thermophilus (strain ATCC BAA-491 / LMD-9).